A 202-amino-acid polypeptide reads, in one-letter code: Glycerol-3-phosphate acyltransferase (202 aa).

5 helical membrane passes run 11–31, 60–80, 88–108, 117–137, and 162–182; these read LLLF…GMVI, AAAA…VLLA, AAQL…WLGF, FLGL…LTWL, and LLLG…VILW.

This sequence belongs to the PlsY family. As to quaternary structure, probably interacts with PlsX.

It localises to the cell inner membrane. The enzyme catalyses an acyl phosphate + sn-glycerol 3-phosphate = a 1-acyl-sn-glycero-3-phosphate + phosphate. It functions in the pathway lipid metabolism; phospholipid metabolism. Catalyzes the transfer of an acyl group from acyl-phosphate (acyl-PO(4)) to glycerol-3-phosphate (G3P) to form lysophosphatidic acid (LPA). This enzyme utilizes acyl-phosphate as fatty acyl donor, but not acyl-CoA or acyl-ACP. In Ruegeria sp. (strain TM1040) (Silicibacter sp.), this protein is Glycerol-3-phosphate acyltransferase.